The chain runs to 443 residues: Xaa-Pro dipeptidase (443 aa).

Residues D246, D257, H339, E384, and E423 each contribute to the Mn(2+) site.

This sequence belongs to the peptidase M24B family. Bacterial-type prolidase subfamily. The cofactor is Mn(2+).

The catalysed reaction is Xaa-L-Pro dipeptide + H2O = an L-alpha-amino acid + L-proline. Functionally, splits dipeptides with a prolyl residue in the C-terminal position. This is Xaa-Pro dipeptidase from Escherichia fergusonii (strain ATCC 35469 / DSM 13698 / CCUG 18766 / IAM 14443 / JCM 21226 / LMG 7866 / NBRC 102419 / NCTC 12128 / CDC 0568-73).